Reading from the N-terminus, the 496-residue chain is tRNA-2-methylthio-N(6)-dimethylallyladenosine synthase (496 aa).

An MTTase N-terminal domain is found at 10–126 (RTYEVRTYGC…LPALLERARV (117 aa)). The [4Fe-4S] cluster site is built by cysteine 19, cysteine 55, cysteine 89, cysteine 163, cysteine 167, and cysteine 170. The Radical SAM core domain occupies 149 to 380 (RESAYAAWVS…ALVNEIAWEE (232 aa)). A TRAM domain is found at 382–451 (KRLVGRRVEL…PHHLVADGPV (70 aa)). The disordered stretch occupies residues 465-496 (ARNAAPAPSSGVTLGMPTVGAPAPLPDAPACR). Residues 487–496 (APLPDAPACR) are compositionally biased toward pro residues.

This sequence belongs to the methylthiotransferase family. MiaB subfamily. In terms of assembly, monomer. [4Fe-4S] cluster is required as a cofactor.

Its subcellular location is the cytoplasm. The catalysed reaction is N(6)-dimethylallyladenosine(37) in tRNA + (sulfur carrier)-SH + AH2 + 2 S-adenosyl-L-methionine = 2-methylsulfanyl-N(6)-dimethylallyladenosine(37) in tRNA + (sulfur carrier)-H + 5'-deoxyadenosine + L-methionine + A + S-adenosyl-L-homocysteine + 2 H(+). Its function is as follows. Catalyzes the methylthiolation of N6-(dimethylallyl)adenosine (i(6)A), leading to the formation of 2-methylthio-N6-(dimethylallyl)adenosine (ms(2)i(6)A) at position 37 in tRNAs that read codons beginning with uridine. This Nocardioides sp. (strain ATCC BAA-499 / JS614) protein is tRNA-2-methylthio-N(6)-dimethylallyladenosine synthase.